The primary structure comprises 193 residues: Flagellin B3 (193 aa).

Positions Met-1–Gly-12 are excised as a propeptide.

Belongs to the archaeal flagellin family. Post-translationally, glycosylated.

Its subcellular location is the archaeal flagellum. In terms of biological role, flagellin is the subunit protein which polymerizes to form the filaments of archaeal flagella. This is Flagellin B3 (flaB3) from Halobacterium salinarum (strain ATCC 700922 / JCM 11081 / NRC-1) (Halobacterium halobium).